Here is a 594-residue protein sequence, read N- to C-terminus: MKREHQESFGGGVISNNNKTNTNHLNSSKNINFGECSSMQNTNTKQNMWREEKETNGGGMDELLAALGYKVRSSDMADVAQKLEQLEMVMGSAQEEGINHLSSDTVHYDPTDLYSWVQTMLTELNPDSSQINDPLASLGSSSEILNNTFNDDSEYDLSAIPGMAAYPPQEENTAAKRMKTWSEPESEPAVVMSPPPAVENTRPVVLVDTQETGVRLVHTLMACAEAIQQKNLKLAEALVKHISLLASLQTGAMRKVASYFAQALARRIYGNPEETIDSSFSEILHMHFYESSPYLKFAHFTANQAILEAFAGAGRVHVIDFGLKQGMQWPALMQALALRPGGPPTFRLTGIGPPQADNTDALQQVGWKLAQLAQTIGVQFEFRGFVCNSIADLDPNMLEIRPGEAVAVNSVFELHTMLARPGSVEKVLNTVKKINPKIVTIVEQEANHNGPVFVDRFTEALHYYSSLFDSLEGSNSSSNNSNSNSTGLGSPSQDLLMSEIYLGKQICNVVAYEGVDRVERHETLTQWRSRMGSAGFEPVHLGSNAFKQASTLLALFAGGDGYRVEENNGCLMLGWHTRSLIATSAWKLPQNESK.

The tract at residues 1–36 (MKREHQESFGGGVISNNNKTNTNHLNSSKNINFGEC) is disordered. Over residues 15 to 30 (SNNNKTNTNHLNSSKN) the composition is skewed to low complexity. The DELLA motif signature appears at 61–65 (DELLA). The 381-residue stretch at 207–587 (VDTQETGVRL…RSLIATSAWK (381 aa)) folds into the GRAS domain. Positions 214-268 (VRLVHTLMACAEAIQQKNLKLAEALVKHISLLASLQTGAMRKVASYFAQALARRI) are leucine repeat I (LRI). The required for possible homodimerization stretch occupies residues 216–253 (LVHTLMACAEAIQQKNLKLAEALVKHISLLASLQTGAM). The short motif at 221 to 225 (MACAE) is the LxCxE motif; degenerate element. Residues 285-350 (HMHFYESSPY…GGPPTFRLTG (66 aa)) are VHIID. Residues 316–320 (VHVID) carry the VHIID motif. The tract at residues 364–396 (QVGWKLAQLAQTIGVQFEFRGFVCNSIADLDPN) is leucine repeat II (LRII). The tract at residues 406–508 (VAVNSVFELH…EIYLGKQICN (103 aa)) is PFYRE. The LXXLL motif; degenerate motif lies at 414-418 (LHTML). The tract at residues 511–587 (AYEGVDRVER…RSLIATSAWK (77 aa)) is SAW.

It belongs to the GRAS family. DELLA subfamily. As to quaternary structure, may be a homodimer. Post-translationally, ubiquitinated. Upon GA application it is ubiquitinated, leading to its subsequent degradation. Strongly expressed in the vascular tissue and endodermis but barely in the inner cortical cells where arbuscule are formed during arbuscular mycorrhizal (AM) symbiosis.

Its subcellular location is the nucleus. In terms of biological role, probable transcriptional regulator that acts as a repressor of the gibberellin (GA) signaling pathway. Probably acts by participating in large multiprotein complexes that repress transcription of GA-inducible genes. Upon GA application, it is degraded by the proteasome, allowing the GA signaling pathway. Together with DELLA2, required to enable arbuscule development during arbuscular mycorrhizal (AM) symbiosis with AM fungi (e.g. Glomus versiforme) via the regulation of RAM1 which, in turn, regulates various AM genes (e.g. NSP1, NSP2, PT4, LEC5, RAM2, EXO70I, STR and RAD1). The protein is DELLA protein 1 of Medicago truncatula (Barrel medic).